Reading from the N-terminus, the 1379-residue chain is Hepatocyte growth factor receptor (1379 aa).

An N-terminal signal peptide occupies residues 1 to 24 (MKAPTVLAPGILVLLLSLVQRSHG). The Extracellular portion of the chain corresponds to 25–931 (ECKEALVKSE…VIVQPDQNFA (907 aa)). One can recognise a Sema domain in the interval 27-514 (KEALVKSEMN…TGKKITKIPL (488 aa)). Asn45 carries N-linked (GlcNAc...) asparagine glycosylation. 4 disulfides stabilise this stretch: Cys95/Cys101, Cys98/Cys160, Cys133/Cys141, and Cys171/Cys174. Asn106 carries N-linked (GlcNAc...) asparagine glycosylation. N-linked (GlcNAc...) asparagine glycosylation is found at Asn201 and Asn357. 2 disulfide bridges follow: Cys297–Cys362 and Cys384–Cys396. Asn398 and Asn404 each carry an N-linked (GlcNAc...) asparagine glycan. 4 disulfides stabilise this stretch: Cys519–Cys537, Cys525–Cys560, Cys528–Cys544, and Cys540–Cys550. IPT/TIG domains follow at residues 562-654 (PAVY…FSYV), 656-738 (PVIT…FSYR), and 741-835 (PVVY…LTYV). Thr581 carries O-linked (Man) threonine glycosylation. Residues Asn606 and Asn634 are each glycosylated (N-linked (GlcNAc...) asparagine). O-linked (Man) threonine glycans are attached at residues Thr675 and Thr760. Asn784 and Asn878 each carry an N-linked (GlcNAc...) asparagine glycan. Residues 932–954 (GLIIGAVSISVVVLLLSGLFLWM) form a helical membrane-spanning segment. The Cytoplasmic segment spans residues 955-1379 (RKRKHKDLGS…QDNIDGEGNT (425 aa)). Position 964 is a phosphoserine (Ser964). Thr975 carries the phosphothreonine modification. Ser988, Ser995, and Ser998 each carry phosphoserine. Tyr1001 is modified (phosphotyrosine). One can recognise a Protein kinase domain in the interval 1076-1343 (VHFNEVIGRG…RISSIFSTFI (268 aa)). Residues 1082 to 1090 (IGRGHFGCV) and Lys1108 each bind ATP. Asp1202 functions as the Proton acceptor in the catalytic mechanism. The segment at 1210–1379 (LDEKFTVKVA…QDNIDGEGNT (170 aa)) is interaction with RANBP9. Tyr1228 bears the Phosphotyrosine mark. Phosphotyrosine; by autocatalysis is present on residues Tyr1232 and Tyr1233. Phosphothreonine is present on Thr1287. Residues 1318–1357 (WHPKAEMRPSFSELVSRISSIFSTFIGEHYVHVNATYVNV) form an interaction with MUC20 region. Tyr1347 and Tyr1354 each carry phosphotyrosine; by autocatalysis. The residue at position 1363 (Tyr1363) is a Phosphotyrosine.

The protein belongs to the protein kinase superfamily. Tyr protein kinase family. In terms of assembly, heterodimer made of an alpha chain (50 kDa) and a beta chain (145 kDa) which are disulfide linked. Binds PLXNB1. Interacts when phosphorylated with downstream effectors including STAT3, PIK3R1, SRC, PCLG1, GRB2 and GAB1. When phosphorylated at Tyr-1354, interacts with INPPL1/SHIP2. Interacts with RANBP9 and RANBP10. Interacts with INPP5D/SHIP1. Interacts with SPSB1, SPSB2, SPSB4 and probably SPSB3. SPSB1 binding occurs in the presence and in the absence of HGF, however HGF treatment has a positive effect on this interaction. Interacts with MUC20; prevents interaction with GRB2 and suppresses hepatocyte growth factor-induced cell proliferation. Interacts with GRB10. Interacts with PTPN1 and PTPN2. Interacts with HSP90AA1 and HSP90AB1; the interaction suppresses MET kinase activity. Interacts with tensin TNS3. Interacts (when phosphorylated) with tensin TNS4 (via SH2 domain); the interaction increases MET protein stability by inhibiting MET endocytosis and subsequent lysosomal degradation. As to quaternary structure, (Microbial infection) Interacts with L.monocytogenes InlB. InlB probably dimerizes upon binding to MET, which encourages subsequent dimerization of MET. Autophosphorylated in response to ligand binding on Tyr-1232 and Tyr-1233 in the kinase domain leading to further phosphorylation of Tyr-1347 and Tyr-1354 in the C-terminal multifunctional docking site. Dephosphorylated by PTPRJ at Tyr-1347 and Tyr-1363. Dephosphorylated by PTPN1 and PTPN2. In terms of processing, ubiquitinated. Ubiquitination by CBL regulates MET endocytosis, resulting in decreasing plasma membrane receptor abundance, and in endosomal degradation and/or recycling of internalized receptors. Post-translationally, O-mannosylation of IPT/TIG domains by TMEM260 is required for protein maturation. O-mannosylated residues are composed of single mannose glycans that are not elongated or modified. (Microbial infection) Tyrosine phosphorylation is stimulated by L.monocytogenes InlB.

It localises to the membrane. The enzyme catalyses L-tyrosyl-[protein] + ATP = O-phospho-L-tyrosyl-[protein] + ADP + H(+). Its activity is regulated as follows. In its inactive state, the C-terminal tail interacts with the catalytic domain and inhibits the kinase activity. Upon ligand binding, the C-terminal tail is displaced and becomes phosphorylated, thus increasing the kinase activity. Its function is as follows. Receptor tyrosine kinase that transduces signals from the extracellular matrix into the cytoplasm by binding to hepatocyte growth factor/HGF ligand. Regulates many physiological processes including proliferation, scattering, morphogenesis and survival. Ligand binding at the cell surface induces autophosphorylation of MET on its intracellular domain that provides docking sites for downstream signaling molecules. Following activation by ligand, interacts with the PI3-kinase subunit PIK3R1, PLCG1, SRC, GRB2, STAT3 or the adapter GAB1. Recruitment of these downstream effectors by MET leads to the activation of several signaling cascades including the RAS-ERK, PI3 kinase-AKT, or PLCgamma-PKC. The RAS-ERK activation is associated with the morphogenetic effects while PI3K/AKT coordinates prosurvival effects. During embryonic development, MET signaling plays a role in gastrulation, development and migration of neuronal precursors, angiogenesis and kidney formation. During skeletal muscle development, it is crucial for the migration of muscle progenitor cells and for the proliferation of secondary myoblasts. In adults, participates in wound healing as well as organ regeneration and tissue remodeling. Also promotes differentiation and proliferation of hematopoietic cells. May regulate cortical bone osteogenesis. (Microbial infection) Acts as a receptor for Listeria monocytogenes internalin InlB, mediating entry of the pathogen into cells. This chain is Hepatocyte growth factor receptor (Met), found in Mus musculus (Mouse).